Here is a 346-residue protein sequence, read N- to C-terminus: MQPIRYRTDLTPYNTFGLRAQARAFIALEHADELRDIVRLLEFDRDTVLWLGGGSNILLMQDYAGLVVHMENKGIREIARSDGMVLIEAQAGEIWHDFVLHTVALGLSGLENLSLIPGTVGASPVQNIGAYGVEAKDVIHSVRCFDLDTETFVELANADCRFAYRESLFKQEGKGRYVIVSVVFALKTHFVPTLGYGDLAAAVAELSAGRVPTAKDVSDAVCAIRNSKLPNPNVLGNVGSFFKNPVVSAEKAATLLQRHPDMPRYPQPDGSVKLAAGWLIDQCRLKGFQIGGAAVHDRQALVLVNKNNASANDVRQLAQHIKFTVFARFQVELHAEPNWLPASFSL.

The 172-residue stretch at 18 to 189 folds into the FAD-binding PCMH-type domain; it reads LRAQARAFIA…VSVVFALKTH (172 aa). Residue Arg165 is part of the active site. The active-site Proton donor is the Ser240. Residue Glu336 is part of the active site.

This sequence belongs to the MurB family. FAD serves as cofactor.

It localises to the cytoplasm. It carries out the reaction UDP-N-acetyl-alpha-D-muramate + NADP(+) = UDP-N-acetyl-3-O-(1-carboxyvinyl)-alpha-D-glucosamine + NADPH + H(+). It participates in cell wall biogenesis; peptidoglycan biosynthesis. In terms of biological role, cell wall formation. This is UDP-N-acetylenolpyruvoylglucosamine reductase from Neisseria meningitidis serogroup B (strain ATCC BAA-335 / MC58).